Here is a 390-residue protein sequence, read N- to C-terminus: Chorismate synthase 2 (390 aa).

NADP(+)-binding residues include R39 and R45. Residues 132–134, 253–254, G298, 313–317, and R339 contribute to the FMN site; these read RSS, NA, and KPIPT.

This sequence belongs to the chorismate synthase family. In terms of assembly, homotetramer. FMNH2 is required as a cofactor.

It catalyses the reaction 5-O-(1-carboxyvinyl)-3-phosphoshikimate = chorismate + phosphate. It functions in the pathway metabolic intermediate biosynthesis; chorismate biosynthesis; chorismate from D-erythrose 4-phosphate and phosphoenolpyruvate: step 7/7. Functionally, catalyzes the anti-1,4-elimination of the C-3 phosphate and the C-6 proR hydrogen from 5-enolpyruvylshikimate-3-phosphate (EPSP) to yield chorismate, which is the branch point compound that serves as the starting substrate for the three terminal pathways of aromatic amino acid biosynthesis. This reaction introduces a second double bond into the aromatic ring system. The sequence is that of Chorismate synthase 2 from Bacillus cereus (strain ZK / E33L).